Reading from the N-terminus, the 150-residue chain is Large ribosomal subunit protein bL9 (150 aa).

It belongs to the bacterial ribosomal protein bL9 family.

Functionally, binds to the 23S rRNA. This chain is Large ribosomal subunit protein bL9, found in Enterococcus faecalis (strain ATCC 700802 / V583).